A 307-amino-acid chain; its full sequence is Major immediate early protein (307 aa).

Residues Cys39–Asn92 form an RING-type zinc finger.

This Orgyia pseudotsugata multicapsid polyhedrosis virus (OpMNPV) protein is Major immediate early protein (PE38).